The sequence spans 2254 residues: Acetyl-CoA carboxylase 1 (2254 aa).

Positions 36 to 543 (PIHSILIANN…HTGWLDSRIA (508 aa)) constitute a Biotin carboxylation domain. Residues 189-381 (NSNLVTIPEE…LPAAQVAVGM (193 aa)) form the ATP-grasp domain. 215-272 (CQVVGYPAMIKASWGGGGKGIRKVHNDDEVRALFKQVQGEVPGSPIFIMKVASQSRHL) contacts ATP. Glu338, Glu352, and Asn354 together coordinate Mg(2+). Residues Glu338, Glu352, and Asn354 each contribute to the Mn(2+) site. Residue Arg356 is part of the active site. The Biotinyl-binding domain occupies 670 to 744 (LQNDHDPSKL…QAGELIANLD (75 aa)). Lys711 carries the N6-biotinyllysine modification. Thr1031 bears the Phosphothreonine mark. Ser1192 is modified (phosphoserine). A CoA carboxyltransferase N-terminal domain is found at 1492-1831 (QYKPLGYLDR…YVGGPLPVLA (340 aa)). A carboxyltransferase region spans residues 1492–2150 (QYKPLGYLDR…ESSLVKNVRE (659 aa)). The CoA site is built by Arg1740, Lys2041, and Arg2043. One can recognise a CoA carboxyltransferase C-terminal domain in the interval 1835 to 2150 (PPERIVEYVP…ESSLVKNVRE (316 aa)).

As to quaternary structure, homodimer. Biotin serves as cofactor. The cofactor is Mg(2+). Mn(2+) is required as a cofactor. In terms of tissue distribution, expressed in roots, trichomes, epidermal leaf cells, siliques, petals, anthers, and seeds.

It is found in the cytoplasm. The protein resides in the cytosol. The catalysed reaction is hydrogencarbonate + acetyl-CoA + ATP = malonyl-CoA + ADP + phosphate + H(+). It catalyses the reaction N(6)-biotinyl-L-lysyl-[protein] + hydrogencarbonate + ATP = N(6)-carboxybiotinyl-L-lysyl-[protein] + ADP + phosphate + H(+). It participates in lipid metabolism; malonyl-CoA biosynthesis; malonyl-CoA from acetyl-CoA: step 1/1. Its function is as follows. Multifunctional enzyme that catalyzes the carboxylation of acetyl-CoA, forming malonyl-CoA, which is used in the plastid for fatty acid synthesis and in the cytosol in various biosynthetic pathways including fatty acid elongation. Required for very long chain fatty acids elongation. Necessary for embryo and plant development. Plays a central function in embryo morphogenesis, especially in apical meristem development. Involved in cell proliferation and tissue patterning. May act as a repressor of cytokinin response. The sequence is that of Acetyl-CoA carboxylase 1 (ACC1) from Arabidopsis thaliana (Mouse-ear cress).